Reading from the N-terminus, the 196-residue chain is 7-methyl-GTP pyrophosphatase (196 aa).

Catalysis depends on aspartate 72, which acts as the Proton acceptor.

It belongs to the Maf family. YceF subfamily. A divalent metal cation is required as a cofactor.

Its subcellular location is the cytoplasm. The catalysed reaction is N(7)-methyl-GTP + H2O = N(7)-methyl-GMP + diphosphate + H(+). In terms of biological role, nucleoside triphosphate pyrophosphatase that hydrolyzes 7-methyl-GTP (m(7)GTP). May have a dual role in cell division arrest and in preventing the incorporation of modified nucleotides into cellular nucleic acids. In Neisseria meningitidis serogroup A / serotype 4A (strain DSM 15465 / Z2491), this protein is 7-methyl-GTP pyrophosphatase.